We begin with the raw amino-acid sequence, 155 residues long: Protein U1 (155 aa).

This sequence belongs to the nanovirus U1 protein family.

In Cicer arietinum (Chickpea), this protein is Protein U1 (DNA-U1).